The sequence spans 231 residues: Adenosylcobinamide-GDP ribazoletransferase (231 aa).

Transmembrane regions (helical) follow at residues 29–49 (ICAY…SMKL), 53–73 (NFLW…LFHF), 101–121 (IGPF…YAFL), 126–146 (IDLI…LHFG), 167–187 (LISL…IISL), and 211–231 (DVLG…LSLI).

Belongs to the CobS family. The cofactor is Mg(2+).

It is found in the cell inner membrane. It carries out the reaction alpha-ribazole + adenosylcob(III)inamide-GDP = adenosylcob(III)alamin + GMP + H(+). The enzyme catalyses alpha-ribazole 5'-phosphate + adenosylcob(III)inamide-GDP = adenosylcob(III)alamin 5'-phosphate + GMP + H(+). It participates in cofactor biosynthesis; adenosylcobalamin biosynthesis; adenosylcobalamin from cob(II)yrinate a,c-diamide: step 7/7. Its function is as follows. Joins adenosylcobinamide-GDP and alpha-ribazole to generate adenosylcobalamin (Ado-cobalamin). Also synthesizes adenosylcobalamin 5'-phosphate from adenosylcobinamide-GDP and alpha-ribazole 5'-phosphate. The polypeptide is Adenosylcobinamide-GDP ribazoletransferase (Kosmotoga olearia (strain ATCC BAA-1733 / DSM 21960 / TBF 19.5.1)).